A 174-amino-acid polypeptide reads, in one-letter code: CDP-archaeol synthase (174 aa).

The next 4 membrane-spanning stretches (helical) occupy residues 51–71 (LIGLLQILLAPHIAPYLAGFI), 74–94 (SLLVGYSYIALITMPFGALLG), 112–132 (MLPIADQLDFVAGAWVLTFLL), and 136–156 (WLLANFTIWVAIAVILIIPVF).

It belongs to the CDP-archaeol synthase family. The cofactor is Mg(2+).

The protein localises to the cell membrane. The catalysed reaction is 2,3-bis-O-(geranylgeranyl)-sn-glycerol 1-phosphate + CTP + H(+) = CDP-2,3-bis-O-(geranylgeranyl)-sn-glycerol + diphosphate. The protein operates within membrane lipid metabolism; glycerophospholipid metabolism. Functionally, catalyzes the formation of CDP-2,3-bis-(O-geranylgeranyl)-sn-glycerol (CDP-archaeol) from 2,3-bis-(O-geranylgeranyl)-sn-glycerol 1-phosphate (DGGGP) and CTP. This reaction is the third ether-bond-formation step in the biosynthesis of archaeal membrane lipids. This chain is CDP-archaeol synthase, found in Methanocella arvoryzae (strain DSM 22066 / NBRC 105507 / MRE50).